The chain runs to 338 residues: Ribosomal RNA large subunit methyltransferase F (338 aa).

The disordered stretch occupies residues methionine 1 to histidine 21.

The protein belongs to the methyltransferase superfamily. METTL16/RlmF family.

The protein resides in the cytoplasm. It carries out the reaction adenosine(1618) in 23S rRNA + S-adenosyl-L-methionine = N(6)-methyladenosine(1618) in 23S rRNA + S-adenosyl-L-homocysteine + H(+). Specifically methylates the adenine in position 1618 of 23S rRNA. The sequence is that of Ribosomal RNA large subunit methyltransferase F from Photobacterium profundum (strain SS9).